The primary structure comprises 672 residues: uncharacterized protein (672 aa).

The protein belongs to the MG032/MG096/MG288 family.

This is an uncharacterized protein from Mycoplasma pneumoniae (strain ATCC 29342 / M129 / Subtype 1) (Mycoplasmoides pneumoniae).